Reading from the N-terminus, the 145-residue chain is Ribonuclease P protein component (145 aa).

The interval 121 to 145 is disordered; sequence PAAAGTMPPARTVHPSSLSPTEPEL. Residues 134-145 show a composition bias toward polar residues; sequence HPSSLSPTEPEL.

This sequence belongs to the RnpA family. Consists of a catalytic RNA component (M1 or rnpB) and a protein subunit.

The catalysed reaction is Endonucleolytic cleavage of RNA, removing 5'-extranucleotides from tRNA precursor.. Functionally, RNaseP catalyzes the removal of the 5'-leader sequence from pre-tRNA to produce the mature 5'-terminus. It can also cleave other RNA substrates such as 4.5S RNA. The protein component plays an auxiliary but essential role in vivo by binding to the 5'-leader sequence and broadening the substrate specificity of the ribozyme. In Xanthomonas axonopodis pv. citri (strain 306), this protein is Ribonuclease P protein component.